Consider the following 207-residue polypeptide: Guanylate kinase (207 aa).

The 181-residue stretch at 4 to 184 (GTLYIVSAPS…ALTDLKTIIR (181 aa)) folds into the Guanylate kinase-like domain. ATP is bound at residue 11–18 (APSGAGKS).

It belongs to the guanylate kinase family.

Its subcellular location is the cytoplasm. It catalyses the reaction GMP + ATP = GDP + ADP. Essential for recycling GMP and indirectly, cGMP. The sequence is that of Guanylate kinase from Escherichia coli O6:K15:H31 (strain 536 / UPEC).